A 35-amino-acid polypeptide reads, in one-letter code: Natriuretic peptide TNPa (35 aa).

Cys-9 and Cys-25 form a disulfide bridge.

In terms of tissue distribution, expressed by the venom gland.

Its subcellular location is the secreted. Snake venom natriuretic peptide that exhibits vasoactive and probable hypotensive activity. Is only weakly active on natriuretic peptide receptor-C (NPR3). Stimulates cGMP production through the natriuretic peptide receptor 1 (NPR1) with moderate potencies for the rat NPR1 (EC(50)=2020 nM), and very weak potencies over human NPR1 (15% activation at 10 uM). In vivo, does not impact systolic and diastolic blood pressure, as well as heart rate, when intravenously injected in conscious rabbits. Does not affect the bradycardia due to cardiac afferent stimulation (Bezold-Jarisch reflex). This is Natriuretic peptide TNPa from Oxyuranus microlepidotus (Inland taipan).